The primary structure comprises 353 residues: Photosystem II D2 protein (353 aa).

Thr2 carries the N-acetylthreonine modification. Thr2 is modified (phosphothreonine). The chain crosses the membrane as a helical span at residues 41–61 (CAYFAVGGWFTGTTFVTSWYT). His118 contacts chlorophyll a. Residues 125–141 (GFMLRQFELARSVQLRP) form a helical membrane-spanning segment. The pheophytin a site is built by Gln130 and Asn143. A helical transmembrane segment spans residues 153–166 (VFVSVFLIYPLGQS). His198 provides a ligand contact to chlorophyll a. The helical transmembrane segment at 208–228 (AALLCAIHGATVENTLFEDGD) threads the bilayer. Residues His215 and Phe262 each contribute to the a plastoquinone site. Fe cation is bound at residue His215. Position 269 (His269) interacts with Fe cation. Residues 279-295 (GLWMSALGVVGLALNLR) traverse the membrane as a helical segment.

This sequence belongs to the reaction center PufL/M/PsbA/D family. In terms of assembly, PSII is composed of 1 copy each of membrane proteins PsbA, PsbB, PsbC, PsbD, PsbE, PsbF, PsbH, PsbI, PsbJ, PsbK, PsbL, PsbM, PsbT, PsbX, PsbY, PsbZ, Psb30/Ycf12, at least 3 peripheral proteins of the oxygen-evolving complex and a large number of cofactors. It forms dimeric complexes. The D1/D2 heterodimer binds P680, chlorophylls that are the primary electron donor of PSII, and subsequent electron acceptors. It shares a non-heme iron and each subunit binds pheophytin, quinone, additional chlorophylls, carotenoids and lipids. There is also a Cl(-1) ion associated with D1 and D2, which is required for oxygen evolution. The PSII complex binds additional chlorophylls, carotenoids and specific lipids. serves as cofactor.

It localises to the plastid. Its subcellular location is the chloroplast thylakoid membrane. It carries out the reaction 2 a plastoquinone + 4 hnu + 2 H2O = 2 a plastoquinol + O2. In terms of biological role, photosystem II (PSII) is a light-driven water:plastoquinone oxidoreductase that uses light energy to abstract electrons from H(2)O, generating O(2) and a proton gradient subsequently used for ATP formation. It consists of a core antenna complex that captures photons, and an electron transfer chain that converts photonic excitation into a charge separation. The D1/D2 (PsbA/PsbD) reaction center heterodimer binds P680, the primary electron donor of PSII as well as several subsequent electron acceptors. D2 is needed for assembly of a stable PSII complex. In Solanum bulbocastanum (Wild potato), this protein is Photosystem II D2 protein.